The following is a 209-amino-acid chain: Orotate phosphoribosyltransferase (209 aa).

5-phospho-alpha-D-ribose 1-diphosphate is bound by residues arginine 98, lysine 102, histidine 104, and 124–132 (EDLISTGKS). Orotate is bound at residue serine 128.

The protein belongs to the purine/pyrimidine phosphoribosyltransferase family. PyrE subfamily. In terms of assembly, homodimer. Requires Mg(2+) as cofactor.

The catalysed reaction is orotidine 5'-phosphate + diphosphate = orotate + 5-phospho-alpha-D-ribose 1-diphosphate. Its pathway is pyrimidine metabolism; UMP biosynthesis via de novo pathway; UMP from orotate: step 1/2. In terms of biological role, catalyzes the transfer of a ribosyl phosphate group from 5-phosphoribose 1-diphosphate to orotate, leading to the formation of orotidine monophosphate (OMP). In Malacoplasma penetrans (strain HF-2) (Mycoplasma penetrans), this protein is Orotate phosphoribosyltransferase.